The following is a 143-amino-acid chain: Hemoglobin subunit alpha (143 aa).

One can recognise a Globin domain in the interval 2-143; the sequence is TLSDKDKSTV…VALALAERYR (142 aa). Residue H60 coordinates O2. A heme b-binding site is contributed by H89.

Belongs to the globin family. As to quaternary structure, heterotetramer of two alpha chains and two beta chains. As to expression, red blood cells.

Involved in oxygen transport from gills to the various peripheral tissues. The sequence is that of Hemoglobin subunit alpha (hba) from Thunnus thynnus (Atlantic bluefin tuna).